A 134-amino-acid polypeptide reads, in one-letter code: Transcription antitermination protein NusB (134 aa).

This sequence belongs to the NusB family.

Its function is as follows. Involved in transcription antitermination. Required for transcription of ribosomal RNA (rRNA) genes. Binds specifically to the boxA antiterminator sequence of the ribosomal RNA (rrn) operons. The chain is Transcription antitermination protein NusB from Halothermothrix orenii (strain H 168 / OCM 544 / DSM 9562).